A 152-amino-acid polypeptide reads, in one-letter code: Protein-export protein SecB (152 aa).

It belongs to the SecB family. As to quaternary structure, homotetramer, a dimer of dimers. One homotetramer interacts with 1 SecA dimer.

It is found in the cytoplasm. Its function is as follows. One of the proteins required for the normal export of preproteins out of the cell cytoplasm. It is a molecular chaperone that binds to a subset of precursor proteins, maintaining them in a translocation-competent state. It also specifically binds to its receptor SecA. The polypeptide is Protein-export protein SecB (Rickettsia akari (strain Hartford)).